The chain runs to 323 residues: Galactosylgalactosylxylosylprotein 3-beta-glucuronosyltransferase 2 (323 aa).

Residues 1-2 (MK) lie on the Cytoplasmic side of the membrane. Residues 3 to 23 (SALFTRFFILLPWILIVIIML) traverse the membrane as a helical; Signal-anchor for type II membrane protein segment. Residues 24–323 (DVDTRRPVPP…YHLDTVKIEV (300 aa)) lie on the Lumenal side of the membrane. The disordered stretch occupies residues 51–80 (RLPLRRGGPAHGTQKRNQSRPQPQPEPQLP). An N-linked (GlcNAc...) asparagine glycan is attached at asparagine 67. UDP-alpha-D-glucuronate-binding positions include 87–89 (PTY), aspartate 118, arginine 155, arginine 160, and 185–187 (DDD). Residue aspartate 187 coordinates Mn(2+). Residues 234–243 (WRADRPFAID) form an interaction with galactose moiety of substrate glycoprotein region. Glutamate 273 (proton donor/acceptor) is an active-site residue. Residue asparagine 292 is glycosylated (N-linked (GlcNAc...) asparagine). 300–302 (HTR) serves as a coordination point for UDP-alpha-D-glucuronate.

Belongs to the glycosyltransferase 43 family. In terms of assembly, homodimer. It depends on Mn(2+) as a cofactor. Expressed in the trachea, retina, spinal cord, hippocampus and other brain regions, and, at lower levels, in testis and ovary.

Its subcellular location is the golgi apparatus membrane. The catalysed reaction is 3-O-(beta-D-galactosyl-(1-&gt;3)-beta-D-galactosyl-(1-&gt;4)-beta-D-xylosyl)-L-seryl-[protein] + UDP-alpha-D-glucuronate = 3-O-(beta-D-GlcA-(1-&gt;3)-beta-D-Gal-(1-&gt;3)-beta-D-Gal-(1-&gt;4)-beta-D-Xyl)-L-seryl-[protein] + UDP + H(+). Its pathway is protein modification; protein glycosylation. Functionally, involved in the biosynthesis of L2/HNK-1 carbohydrate epitope on both glycolipids and glycoproteins. This is Galactosylgalactosylxylosylprotein 3-beta-glucuronosyltransferase 2 (B3GAT2) from Homo sapiens (Human).